The chain runs to 455 residues: Ribosomal protein uS12 methylthiotransferase RimO (455 aa).

The MTTase N-terminal domain occupies 10–120 (PKVGMVSLGC…VVEAVHDAAP (111 aa)). [4Fe-4S] cluster is bound by residues Cys19, Cys55, Cys84, Cys151, Cys155, and Cys158. A Radical SAM core domain is found at 137–380 (LTPRHYSYLK…MAKTAAISAA (244 aa)). Residues 383-455 (EAKIGRTLPV…DEHDLFGVVT (73 aa)) enclose the TRAM domain.

It belongs to the methylthiotransferase family. RimO subfamily. [4Fe-4S] cluster serves as cofactor.

The protein resides in the cytoplasm. It carries out the reaction L-aspartate(89)-[ribosomal protein uS12]-hydrogen + (sulfur carrier)-SH + AH2 + 2 S-adenosyl-L-methionine = 3-methylsulfanyl-L-aspartate(89)-[ribosomal protein uS12]-hydrogen + (sulfur carrier)-H + 5'-deoxyadenosine + L-methionine + A + S-adenosyl-L-homocysteine + 2 H(+). Its function is as follows. Catalyzes the methylthiolation of an aspartic acid residue of ribosomal protein uS12. In Sphingopyxis alaskensis (strain DSM 13593 / LMG 18877 / RB2256) (Sphingomonas alaskensis), this protein is Ribosomal protein uS12 methylthiotransferase RimO.